We begin with the raw amino-acid sequence, 324 residues long: Ribose-phosphate pyrophosphokinase (324 aa).

ATP contacts are provided by residues Asn-45–Glu-47 and Arg-104–Gln-105. His-138 and Asp-178 together coordinate Mg(2+). Lys-201 is a catalytic residue. Residues Arg-203, Asp-229, and Asp-233–Thr-237 each bind D-ribose 5-phosphate.

It belongs to the ribose-phosphate pyrophosphokinase family. Class I subfamily. In terms of assembly, homohexamer. Requires Mg(2+) as cofactor.

It is found in the cytoplasm. The enzyme catalyses D-ribose 5-phosphate + ATP = 5-phospho-alpha-D-ribose 1-diphosphate + AMP + H(+). Its pathway is metabolic intermediate biosynthesis; 5-phospho-alpha-D-ribose 1-diphosphate biosynthesis; 5-phospho-alpha-D-ribose 1-diphosphate from D-ribose 5-phosphate (route I): step 1/1. In terms of biological role, involved in the biosynthesis of the central metabolite phospho-alpha-D-ribosyl-1-pyrophosphate (PRPP) via the transfer of pyrophosphoryl group from ATP to 1-hydroxyl of ribose-5-phosphate (Rib-5-P). In Streptomyces avermitilis (strain ATCC 31267 / DSM 46492 / JCM 5070 / NBRC 14893 / NCIMB 12804 / NRRL 8165 / MA-4680), this protein is Ribose-phosphate pyrophosphokinase.